Consider the following 644-residue polypeptide: MGKIIGIDLGTTNSCVSVVENNAPKVVENAEGGRTTPSIIAYVEDGEVLVGAPAKRQSVTNPKNTIYAVKRLMGRKFTDPEVQKDIGLMPYSIIAADNGDAWVEARDRKMAPQQVSAEILRKMKKTAEDYLGEEVTEAVITVPAYFNDSQRQATKDAGRIAGLDVKRIINEPTAAALAFGLDKQDKVDRKIAVYDLGGGTFDVSIIEIANVDGEKQFEVLSTNGDTFLGGEDFDQRIIDWIIAEFKKEQGVDLSKDVLALQRLKDAAEKAKIELSSAQQTEINLPYVTADASGPKHLNLKLTRAKLESLVEELINRTAGPCLTAIKDAGVNVSEIDDVILVGGQTRMPAVQDKVKEIFGKEPRKDVNPDEAVAVGAAIQGSVLSGDRKDVLLLDVTPLSLGIETLGGVMTKMIPKNTTIPTKHSQVYSTAEDNQPAVTIKCFQGEREMAAANKLLGEFNLEGIAPAQRGMPQIEVTFDIDANGILHVTAKDKTTGKENKITIKANSGLTEEEIQRMVKDAEANAAEDKKALELVTARNTADALAHSTKKALEEHGASLEASEKEAIEAALKELDEAIKGSDKEAIEAKTEALGKASQKLGEKVMAAEQAKSGGAAPGAAPGGAQQAAPDADVVDADFKEVDDKK.

T200 bears the Phosphothreonine; by autocatalysis mark. Positions 603–644 are disordered; that stretch reads VMAAEQAKSGGAAPGAAPGGAQQAAPDADVVDADFKEVDDKK. Low complexity predominate over residues 612–630; the sequence is GGAAPGAAPGGAQQAAPDA. Residues 635–644 show a composition bias toward basic and acidic residues; sequence ADFKEVDDKK.

This sequence belongs to the heat shock protein 70 family.

Functionally, acts as a chaperone. This Polynucleobacter asymbioticus (strain DSM 18221 / CIP 109841 / QLW-P1DMWA-1) (Polynucleobacter necessarius subsp. asymbioticus) protein is Chaperone protein DnaK.